An 841-amino-acid polypeptide reads, in one-letter code: Protein translocase subunit SecA (841 aa).

ATP contacts are provided by residues Gln85, 103 to 107 (GEGKT), and Asp492. Positions 786-812 (REEVVQGQTTAHQPQDGDEAKQAKKAP) are disordered. 4 residues coordinate Zn(2+): Cys825, Cys827, Cys836, and Cys837.

The protein belongs to the SecA family. In terms of assembly, monomer and homodimer. Part of the essential Sec protein translocation apparatus which comprises SecA, SecYEG and auxiliary proteins SecDF. Other proteins may also be involved. It depends on Zn(2+) as a cofactor.

It is found in the cell membrane. Its subcellular location is the cytoplasm. It carries out the reaction ATP + H2O + cellular proteinSide 1 = ADP + phosphate + cellular proteinSide 2.. Part of the Sec protein translocase complex. Interacts with the SecYEG preprotein conducting channel. Has a central role in coupling the hydrolysis of ATP to the transfer of proteins into and across the cell membrane, serving as an ATP-driven molecular motor driving the stepwise translocation of polypeptide chains across the membrane. The polypeptide is Protein translocase subunit SecA (Bacillus velezensis (strain DSM 23117 / BGSC 10A6 / LMG 26770 / FZB42) (Bacillus amyloliquefaciens subsp. plantarum)).